Consider the following 536-residue polypeptide: MALTSFLPAPTQLSQDQLEAEEKARSQRSRQTSLVSSRREPPPYGYRKGWIPRLLEDFGDGGAFPEIHVAQYPLDMGRKKKMSNALAIQVDSEGKIKYDAIARQGQSKDKVIYSKYTDLVPKEVMNADDPDLQRPDEEAIKEITEKTRVALEKSVSQKVAAAMPVRAADKLAPAQYIRYTPSQQGVAFNSGAKQRVIRMVEMQKDPMEPPRFKINKKIPRGPPSPPAPVMHSPSRKVTVKEQQEWKIPPCISNWKNAKGYTIPLDKRLAADGRGLQTVHINENFAKLAEALYIADRKAREAVEMRAQVERKMAQKEKEKHEEKLREMAQKARERRAGIKTHVEKEDGEARERDEIRHDRRKERQHDRNLSRAAPDKRSKLQRNENRDISEVIALGVPNPRTSNEVQYDQRLFNQSKGMDSGFAGGEDEIYNVYDQAWRGGKDMAQSIYRPSKNLDKDMYGDDLEARIKTNRFVPDKEFSGSDRRQRGREGPVQFEEDPFGLDKFLEEAKQHGGSKRPSDSSRPKEHEHEGKKRRKE.

The tract at residues 1 to 46 is disordered; the sequence is MALTSFLPAPTQLSQDQLEAEEKARSQRSRQTSLVSSRREPPPYGY. At Ala-2 the chain carries N-acetylalanine. Ser-14 is subject to Phosphoserine. A Glycyl lysine isopeptide (Lys-Gly) (interchain with G-Cter in SUMO2) cross-link involves residue Lys-23. The interval 59–79 is interaction with PPIL1; that stretch reads GDGGAFPEIHVAQYPLDMGRK. Glycyl lysine isopeptide (Lys-Gly) (interchain with G-Cter in SUMO2) cross-links involve residues Lys-81, Lys-97, Lys-115, Lys-122, Lys-141, Lys-158, and Lys-170. The interval 174–339 is SNW; that stretch reads AQYIRYTPSQ…KARERRAGIK (166 aa). Phosphoserine is present on residues Ser-182 and Ser-190. Lys-193 is covalently cross-linked (Glycyl lysine isopeptide (Lys-Gly) (interchain with G-Cter in SUMO2)). The tract at residues 209–234 is disordered; sequence PPRFKINKKIPRGPPSPPAPVMHSPS. Residues Ser-224, Ser-232, and Ser-234 each carry the phosphoserine modification. Glycyl lysine isopeptide (Lys-Gly) (interchain with G-Cter in SUMO2) cross-links involve residues Lys-240, Lys-258, Lys-286, Lys-339, Lys-344, Lys-416, and Lys-441. The interval 311–386 is disordered; the sequence is KMAQKEKEKH…RSKLQRNENR (76 aa). Ser-446 carries the phosphoserine modification. Residue Lys-452 forms a Glycyl lysine isopeptide (Lys-Gly) (interchain with G-Cter in SUMO2) linkage. Composition is skewed to basic and acidic residues over residues 469–489 and 503–530; these read TNRF…RGRE and KFLE…EHEG. The interval 469–536 is disordered; sequence TNRFVPDKEF…EHEGKKRRKE (68 aa). Ser-479 and Ser-481 each carry phosphoserine. Lys-509 participates in a covalent cross-link: Glycyl lysine isopeptide (Lys-Gly) (interchain with G-Cter in SUMO2).

Belongs to the SNW family. Identified in the spliceosome C complex. Associates with U4/U6-U5 tri-small nuclear ribonucleoproteins (U4/U6-U5 tri-snRNPs). Component of the minor spliceosome, which splices U12-type introns. Interacts with SKI, SMAD2,SMAD3, RBPJ, RB1, PABPN1, MAGEA1, SIRT1, FOXN3, U2AF2, PPIL1, DAXX and ATP1B4. Interacts with VDR and RXRA; preferentially associates with VDR:RXRA heterodimers. Interacts with NCOR2. Interacts with MAML1. Interacts with NOTCH1 NICD; the interaction involves multimerized NOTCH1 NICD. Forms a complex with NOTCH1 NICD and MAML1; the association is dissociated by RBPJ. Associates with positive transcription elongation factor b (P-TEFb). Component of the SNARP complex which consists at least of SNIP1, SNW1, THRAP3, BCLAF1 and PNN.

The protein localises to the nucleus. Involved in pre-mRNA splicing as component of the spliceosome. As a component of the minor spliceosome, involved in the splicing of U12-type introns in pre-mRNAs. Required in the specific splicing of CDKN1A pre-mRNA; the function probably involves the recruitment of U2AF2 to the mRNA. May recruit PPIL1 to the spliceosome. May be involved in cyclin-D1/CCND1 mRNA stability through the SNARP complex which associates with both the 3'end of the CCND1 gene and its mRNA. Involved in transcriptional regulation. Modulates TGF-beta-mediated transcription via association with SMAD proteins, MYOD1-mediated transcription via association with PABPN1, RB1-mediated transcriptional repression, and retinoid-X receptor (RXR)- and vitamin D receptor (VDR)-dependent gene transcription in a cell line-specific manner probably involving coactivators NCOA1 and GRIP1. Is involved in NOTCH1-mediated transcriptional activation. Binds to multimerized forms of Notch intracellular domain (NICD) and is proposed to recruit transcriptional coactivators such as MAML1 to form an intermediate preactivation complex which associates with DNA-bound CBF-1/RBPJ to form a transcriptional activation complex by releasing SNW1 and redundant NOTCH1 NICD. This chain is SNW domain-containing protein 1 (SNW1), found in Pongo abelii (Sumatran orangutan).